The following is a 439-amino-acid chain: sn-glycerol-3-phosphate-binding periplasmic protein UgpB (439 aa).

The first 25 residues, 1–25 (MFNNAIRKTSICVALTLAFSANAMA), serve as a signal peptide directing secretion. Positions 67, 91, 146, 272, 309, 348, and 399 each coordinate sn-glycerol 3-phosphate.

This sequence belongs to the bacterial solute-binding protein 1 family. In terms of assembly, the complex is composed of two ATP-binding proteins (UgpC), two transmembrane proteins (UgpA and UgpE) and a solute-binding protein (UgpB).

It is found in the periplasm. Functionally, part of the ABC transporter complex UgpBAEC involved in sn-glycerol-3-phosphate (G3P) import. Binds G3P. The polypeptide is sn-glycerol-3-phosphate-binding periplasmic protein UgpB (ugpB) (Yersinia enterocolitica serotype O:8 / biotype 1B (strain NCTC 13174 / 8081)).